The sequence spans 194 residues: RNA polymerase II subunit A C-terminal domain phosphatase SSU72 like protein 3 (194 aa).

It belongs to the SSU72 phosphatase family.

It localises to the nucleus. It catalyses the reaction O-phospho-L-seryl-[protein] + H2O = L-seryl-[protein] + phosphate. The catalysed reaction is O-phospho-L-threonyl-[protein] + H2O = L-threonyl-[protein] + phosphate. Protein phosphatase that catalyzes the dephosphorylation of the C-terminal domain of RNA polymerase II. Plays a role in RNA processing and termination. The chain is RNA polymerase II subunit A C-terminal domain phosphatase SSU72 like protein 3 from Homo sapiens (Human).